We begin with the raw amino-acid sequence, 178 residues long: Protein FAM89A (178 aa).

Belongs to the FAM89 family.

This chain is Protein FAM89A (FAM89A), found in Bos taurus (Bovine).